The primary structure comprises 642 residues: tRNA uridine 5-carboxymethylaminomethyl modification enzyme MnmG (642 aa).

Residues 10 to 15 (GAGHAG), V122, and S177 contribute to the FAD site. 269–283 (SARYCPSLEDKVMRF) contributes to the NAD(+) binding site. Q366 provides a ligand contact to FAD.

This sequence belongs to the MnmG family. In terms of assembly, homodimer. Heterotetramer of two MnmE and two MnmG subunits. It depends on FAD as a cofactor.

It localises to the cytoplasm. Functionally, NAD-binding protein involved in the addition of a carboxymethylaminomethyl (cmnm) group at the wobble position (U34) of certain tRNAs, forming tRNA-cmnm(5)s(2)U34. This chain is tRNA uridine 5-carboxymethylaminomethyl modification enzyme MnmG, found in Syntrophobacter fumaroxidans (strain DSM 10017 / MPOB).